A 332-amino-acid polypeptide reads, in one-letter code: Lipoyl synthase (332 aa).

Positions 55, 60, 66, 81, 85, 88, and 292 each coordinate [4Fe-4S] cluster. A Radical SAM core domain is found at 67 to 281 (WEDREATFLI…SDEAERIGFL (215 aa)).

It belongs to the radical SAM superfamily. Lipoyl synthase family. [4Fe-4S] cluster serves as cofactor.

It localises to the cytoplasm. The enzyme catalyses [[Fe-S] cluster scaffold protein carrying a second [4Fe-4S](2+) cluster] + N(6)-octanoyl-L-lysyl-[protein] + 2 oxidized [2Fe-2S]-[ferredoxin] + 2 S-adenosyl-L-methionine + 4 H(+) = [[Fe-S] cluster scaffold protein] + N(6)-[(R)-dihydrolipoyl]-L-lysyl-[protein] + 4 Fe(3+) + 2 hydrogen sulfide + 2 5'-deoxyadenosine + 2 L-methionine + 2 reduced [2Fe-2S]-[ferredoxin]. It functions in the pathway protein modification; protein lipoylation via endogenous pathway; protein N(6)-(lipoyl)lysine from octanoyl-[acyl-carrier-protein]: step 2/2. In terms of biological role, catalyzes the radical-mediated insertion of two sulfur atoms into the C-6 and C-8 positions of the octanoyl moiety bound to the lipoyl domains of lipoate-dependent enzymes, thereby converting the octanoylated domains into lipoylated derivatives. The chain is Lipoyl synthase from Beutenbergia cavernae (strain ATCC BAA-8 / DSM 12333 / CCUG 43141 / JCM 11478 / NBRC 16432 / NCIMB 13614 / HKI 0122).